The sequence spans 252 residues: Protein BTG3 (252 aa).

The segment at 138–162 (VTSDYHSGSSSSDEETSKEMEVKPS) is disordered.

The protein belongs to the BTG family. In terms of tissue distribution, ubiquitous. High expression in the ventricular zone of the developing central nervous system. High in ovary, testis, prostate, thymus and lung.

Its function is as follows. Overexpression impairs serum-induced cell cycle progression from the G0/G1 to S phase. The chain is Protein BTG3 (BTG3) from Homo sapiens (Human).